A 915-amino-acid chain; its full sequence is Alanine--tRNA ligase (915 aa).

His-609, His-613, Cys-712, and His-716 together coordinate Zn(2+).

Belongs to the class-II aminoacyl-tRNA synthetase family. The cofactor is Zn(2+).

It is found in the cytoplasm. It catalyses the reaction tRNA(Ala) + L-alanine + ATP = L-alanyl-tRNA(Ala) + AMP + diphosphate. Its function is as follows. Catalyzes the attachment of alanine to tRNA(Ala) in a two-step reaction: alanine is first activated by ATP to form Ala-AMP and then transferred to the acceptor end of tRNA(Ala). Also edits incorrectly charged Ser-tRNA(Ala) and Gly-tRNA(Ala) via its editing domain. The protein is Alanine--tRNA ligase of Methanoculleus marisnigri (strain ATCC 35101 / DSM 1498 / JR1).